A 558-amino-acid chain; its full sequence is Glypican-1 (558 aa).

The signal sequence occupies residues 1–23; sequence MELRARGWWLLCAAAALVACARG. 7 cysteine pairs are disulfide-bonded: cysteine 32-cysteine 68, cysteine 62-cysteine 256, cysteine 69-cysteine 259, cysteine 191-cysteine 343, cysteine 246-cysteine 279, cysteine 268-cysteine 415, and cysteine 272-cysteine 401. 2 N-linked (GlcNAc...) asparagine glycosylation sites follow: asparagine 79 and asparagine 116. The interval 341-374 is disordered; that stretch reads QGCGNPKVNPQGPGPEEKRRRGKLAPRERPPSGT. The span at 355–370 shows a compositional bias: basic and acidic residues; it reads PEEKRRRGKLAPRERP. O-linked (Xyl...) (heparan sulfate) serine glycans are attached at residues serine 486, serine 488, and serine 490. The tract at residues 505 to 534 is disordered; that stretch reads RKSSSSRTPLTHALPGLSEQEGQKTSAASC. Serine 530 carries GPI-anchor amidated serine lipidation. The propeptide at 531 to 558 is removed in mature form; it reads AASCPQPPTFLLPLLLFLALTVARPRWR.

It belongs to the glypican family. Post-translationally, S-nitrosylated in a Cu(2+)-dependent manner. Nitric acid (NO) is released from the nitrosylated cysteines by ascorbate or by some other reducing agent, in a Cu(2+) or Zn(2+) dependent manner. This free nitric oxide is then capable of cleaving the heparan sulfate side chains. In terms of processing, N- and O-glycosylated. N-glycosylation is mainly of the complex type containing sialic acid. O-glycosylated with heparan sulfate. The heparan sulfate chains can be cleaved either by the action of heparanase or, degraded by a deaminative process that uses nitric oxide (NO) released from the S-nitrosylated cysteines. This process is triggered by ascorbate, or by some other reducing agent, in a Cu(2+)- or Zn(2+) dependent manner. Cu(2+) ions are provided by ceruloproteins such as APP, PRNP or CP which associate with GCP1 in intracellular compartments or lipid rafts. This cell-associated glypican is further processed to give rise to a medium-released species.

The protein resides in the cell membrane. Its subcellular location is the endosome. The protein localises to the secreted. It is found in the extracellular space. Functionally, cell surface proteoglycan that bears heparan sulfate. Binds, via the heparan sulfate side chains, alpha-4 (V) collagen and participates in Schwann cell myelination. May act as a catalyst in increasing the rate of conversion of prion protein PRPN(C) to PRNP(Sc) via associating (via the heparan sulfate side chains) with both forms of PRPN, targeting them to lipid rafts and facilitating their interaction. Required for proper skeletal muscle differentiation by sequestering FGF2 in lipid rafts preventing its binding to receptors (FGFRs) and inhibiting the FGF-mediated signaling. This chain is Glypican-1 (GPC1), found in Homo sapiens (Human).